Here is a 1157-residue protein sequence, read N- to C-terminus: uncharacterized protein (1157 aa).

Residues 1 to 18 form the signal peptide; that stretch reads MNRNIFITLLISLLALSG. Residue cysteine 19 is the site of N-palmitoyl cysteine attachment. The S-diacylglycerol cysteine moiety is linked to residue cysteine 19. 4 helical membrane passes run 292 to 312, 394 to 414, 423 to 443, and 458 to 478; these read LSVS…FLIG, LGFI…LLIF, ALIT…FMLF, and ISYA…GMII. The interval 1134–1157 is disordered; the sequence is QYQKPVENSGRKLRKLEDHLRNMK. The segment covering 1148-1157 has biased composition (basic and acidic residues); it reads KLEDHLRNMK.

This sequence belongs to the TrbL/VirB6 family.

It is found in the cell membrane. This is an uncharacterized protein from Rickettsia bellii (strain RML369-C).